The chain runs to 553 residues: NAD(P)H-quinone oxidoreductase chain 4 2 (553 aa).

Transmembrane regions (helical) follow at residues 6-26 (FPWLSAIILLPLLASFLIPVI), 34-54 (VRWFALGVGLADFILMCYVFL), 87-107 (ISAPLVLLAGLVTTLSILAAW), 115-135 (LFYFLMLLLYAAQIGVFVAQD), 136-156 (LLLFFLMWEIELIPVYLLVSI), 169-189 (FLLYTAAASIFILVAGLAMAL), 210-230 (ALELVLYAGLLIAFGVKLAIF), 244-264 (SAPVSMILAGVLLKMGGYGLI), 276-296 (IYFAPILAILGVVNIIYGAFA), 312-332 (VSHMGFVLLGIASFTDVGISG), 333-353 (AMLQMLSHGLIAAVLFFLAGV), 376-396 (VFALFTAGAMASLALPGMSGF), 418-438 (VVTVFLASVGLILTPIYLLSM), and 487-507 (IFIAVSFLALIVAIGFYPQLA).

Belongs to the complex I subunit 4 family.

It localises to the cellular thylakoid membrane. It carries out the reaction a plastoquinone + NADH + (n+1) H(+)(in) = a plastoquinol + NAD(+) + n H(+)(out). The enzyme catalyses a plastoquinone + NADPH + (n+1) H(+)(in) = a plastoquinol + NADP(+) + n H(+)(out). In terms of biological role, NDH-1 shuttles electrons from NAD(P)H, via FMN and iron-sulfur (Fe-S) centers, to quinones in the respiratory chain. The immediate electron acceptor for the enzyme in this species is believed to be plastoquinone. Couples the redox reaction to proton translocation (for every two electrons transferred, four hydrogen ions are translocated across the cytoplasmic membrane), and thus conserves the redox energy in a proton gradient. This is NAD(P)H-quinone oxidoreductase chain 4 2 from Microcystis aeruginosa (strain NIES-843 / IAM M-2473).